The sequence spans 145 residues: Transcriptional regulator SlyA (145 aa).

An HTH marR-type domain is found at 2–135 (ELPLGSDLAR…LALLVSRLEK (134 aa)). Positions 49-72 (QIQLAKAIGIEQPSLVRTLDQLEE) form a DNA-binding region, H-T-H motif.

It belongs to the SlyA family. In terms of assembly, homodimer.

Functionally, transcription regulator that can specifically activate or repress expression of target genes. Regulates genes involved in production of antibiotic and exoenzyme virulence determinants in the phytopathogen. Required for the expression of the virulence protein evf during Drosophila melanogaster infection. This chain is Transcriptional regulator SlyA, found in Pectobacterium carotovorum subsp. carotovorum (Erwinia carotovora subsp. carotovora).